Reading from the N-terminus, the 305-residue chain is tRNA-cytidine(32) 2-sulfurtransferase (305 aa).

The interval 1–20 (MTAVLPLPHPLADPAPRDPR) is disordered. The short motif at 59-64 (SGGKDS) is the PP-loop motif element. Residues cysteine 134, cysteine 137, and cysteine 225 each contribute to the [4Fe-4S] cluster site. Low complexity predominate over residues 282 to 293 (DAPPDLAPDPGA). The tract at residues 282–305 (DAPPDLAPDPGAWLTASDATHDSD) is disordered.

It belongs to the TtcA family. As to quaternary structure, homodimer. It depends on Mg(2+) as a cofactor. [4Fe-4S] cluster serves as cofactor.

It localises to the cytoplasm. The enzyme catalyses cytidine(32) in tRNA + S-sulfanyl-L-cysteinyl-[cysteine desulfurase] + AH2 + ATP = 2-thiocytidine(32) in tRNA + L-cysteinyl-[cysteine desulfurase] + A + AMP + diphosphate + H(+). It functions in the pathway tRNA modification. Functionally, catalyzes the ATP-dependent 2-thiolation of cytidine in position 32 of tRNA, to form 2-thiocytidine (s(2)C32). The sulfur atoms are provided by the cysteine/cysteine desulfurase (IscS) system. This chain is tRNA-cytidine(32) 2-sulfurtransferase, found in Xanthomonas oryzae pv. oryzae (strain MAFF 311018).